The primary structure comprises 417 residues: Serine/threonine-protein phosphatase 4 regulatory subunit 2 (417 aa).

Composition is skewed to polar residues over residues Glu140–Arg149, Asn158–Gly170, and Ala186–Ser196. The interval Glu140–Asp417 is disordered. Phosphoserine is present on Ser159. The span at Thr197–Ser213 shows a compositional bias: basic and acidic residues. Over residues Asp214–Ser226 the composition is skewed to low complexity. Ser226 bears the Phosphoserine mark. Basic and acidic residues predominate over residues Lys231–Glu258. Over residues Thr259–Ser269 the composition is skewed to polar residues. Positions Gln283–Thr297 are enriched in basic and acidic residues. A compositionally biased stretch (acidic residues) spans Glu298–Ser311. Basic and acidic residues predominate over residues Met318–Lys327. Over residues Glu338–Asp350 the composition is skewed to acidic residues. Over residues Gln353 to Gly363 the composition is skewed to basic and acidic residues. Residues Asn366–Ser375 show a composition bias toward low complexity. Polar residues predominate over residues Gly385–Ser399. The span at Met400–Asp417 shows a compositional bias: acidic residues.

The protein belongs to the PPP4R2 family. As to quaternary structure, serine/threonine-protein phosphatase 4 (PP4) occurs in different assemblies of the catalytic and one or more regulatory subunits. Component of the PP4 complexes PPP4C-PPP4R2, PPP4C-PPP4R2-PPP4R3A and PPP4C-PPP4R2-PPP4R3B. The PPP4C-PPP4R2 complex appears to be a tetramer composed of 2 molecules of PPP4C and 2 molecules of PPP4R2. Interacts with DDX20/GEMIN3 and GEMIN4. Interacts with RPA2; this DNA damage-dependent interaction recruits PPP4C leading to RPA2 dephosphorylation. In terms of tissue distribution, widely expressed.

The protein resides in the cytoplasm. It localises to the cytoskeleton. The protein localises to the microtubule organizing center. Its subcellular location is the centrosome. It is found in the nucleus. Regulatory subunit of serine/threonine-protein phosphatase 4 (PP4). May regulate the activity of PPP4C at centrosomal microtubule organizing centers. Its interaction with the SMN complex leads to enhance the temporal localization of snRNPs, suggesting a role of PPP4C in maturation of spliceosomal snRNPs. The PPP4C-PPP4R2-PPP4R3A PP4 complex specifically dephosphorylates H2AX phosphorylated on 'Ser-140' (gamma-H2AX) generated during DNA replication and required for DNA double strand break repair. Mediates RPA2 dephosphorylation by recruiting PPP4C to RPA2 in a DNA damage-dependent manner. RPA2 dephosphorylation is required for the efficient RPA2-mediated recruitment of RAD51 to chromatin following double strand breaks, an essential step for DNA repair. The sequence is that of Serine/threonine-protein phosphatase 4 regulatory subunit 2 (PPP4R2) from Homo sapiens (Human).